The sequence spans 208 residues: Uracil phosphoribosyltransferase (208 aa).

5-phospho-alpha-D-ribose 1-diphosphate-binding positions include Arg-78, Arg-103, and 130 to 138 (DPMLATGGT). Uracil is bound by residues Ile-193 and 198 to 200 (GDA). Asp-199 contacts 5-phospho-alpha-D-ribose 1-diphosphate.

The protein belongs to the UPRTase family. The cofactor is Mg(2+).

The catalysed reaction is UMP + diphosphate = 5-phospho-alpha-D-ribose 1-diphosphate + uracil. The protein operates within pyrimidine metabolism; UMP biosynthesis via salvage pathway; UMP from uracil: step 1/1. Its activity is regulated as follows. Allosterically activated by GTP. Its function is as follows. Catalyzes the conversion of uracil and 5-phospho-alpha-D-ribose 1-diphosphate (PRPP) to UMP and diphosphate. The protein is Uracil phosphoribosyltransferase of Blochmanniella floridana.